We begin with the raw amino-acid sequence, 222 residues long: Potassium-transporting ATPase KdpC subunit (222 aa).

The chain crosses the membrane as a helical span at residues 13-35; that stretch reads WAGLRSLLVLTVVTGVLYPLAVT. The disordered stretch occupies residues 136–162; the sequence is TADHKVKPSDVPADAVTSSGSGLDPDI.

Belongs to the KdpC family. The system is composed of three essential subunits: KdpA, KdpB and KdpC.

Its subcellular location is the cell membrane. In terms of biological role, part of the high-affinity ATP-driven potassium transport (or Kdp) system, which catalyzes the hydrolysis of ATP coupled with the electrogenic transport of potassium into the cytoplasm. This subunit acts as a catalytic chaperone that increases the ATP-binding affinity of the ATP-hydrolyzing subunit KdpB by the formation of a transient KdpB/KdpC/ATP ternary complex. The polypeptide is Potassium-transporting ATPase KdpC subunit (Streptomyces avermitilis (strain ATCC 31267 / DSM 46492 / JCM 5070 / NBRC 14893 / NCIMB 12804 / NRRL 8165 / MA-4680)).